A 421-amino-acid polypeptide reads, in one-letter code: 4-hydroxy-3-methylbut-2-en-1-yl diphosphate synthase (flavodoxin) (421 aa).

[4Fe-4S] cluster contacts are provided by Cys311, Cys314, Cys357, and Glu364.

This sequence belongs to the IspG family. It depends on [4Fe-4S] cluster as a cofactor.

The enzyme catalyses (2E)-4-hydroxy-3-methylbut-2-enyl diphosphate + oxidized [flavodoxin] + H2O + 2 H(+) = 2-C-methyl-D-erythritol 2,4-cyclic diphosphate + reduced [flavodoxin]. Its pathway is isoprenoid biosynthesis; isopentenyl diphosphate biosynthesis via DXP pathway; isopentenyl diphosphate from 1-deoxy-D-xylulose 5-phosphate: step 5/6. Functionally, converts 2C-methyl-D-erythritol 2,4-cyclodiphosphate (ME-2,4cPP) into 1-hydroxy-2-methyl-2-(E)-butenyl 4-diphosphate. The chain is 4-hydroxy-3-methylbut-2-en-1-yl diphosphate synthase (flavodoxin) from Xanthomonas oryzae pv. oryzae (strain MAFF 311018).